The sequence spans 164 residues: Crossover junction endodeoxyribonuclease RuvC (164 aa).

Residues Asp7, Glu66, and Asp138 contribute to the active site. Positions 7, 66, and 138 each coordinate Mg(2+).

It belongs to the RuvC family. As to quaternary structure, homodimer which binds Holliday junction (HJ) DNA. The HJ becomes 2-fold symmetrical on binding to RuvC with unstacked arms; it has a different conformation from HJ DNA in complex with RuvA. In the full resolvosome a probable DNA-RuvA(4)-RuvB(12)-RuvC(2) complex forms which resolves the HJ. Mg(2+) is required as a cofactor.

Its subcellular location is the cytoplasm. The catalysed reaction is Endonucleolytic cleavage at a junction such as a reciprocal single-stranded crossover between two homologous DNA duplexes (Holliday junction).. Functionally, the RuvA-RuvB-RuvC complex processes Holliday junction (HJ) DNA during genetic recombination and DNA repair. Endonuclease that resolves HJ intermediates. Cleaves cruciform DNA by making single-stranded nicks across the HJ at symmetrical positions within the homologous arms, yielding a 5'-phosphate and a 3'-hydroxyl group; requires a central core of homology in the junction. The consensus cleavage sequence is 5'-(A/T)TT(C/G)-3'. Cleavage occurs on the 3'-side of the TT dinucleotide at the point of strand exchange. HJ branch migration catalyzed by RuvA-RuvB allows RuvC to scan DNA until it finds its consensus sequence, where it cleaves and resolves the cruciform DNA. The protein is Crossover junction endodeoxyribonuclease RuvC of Paracoccus denitrificans (strain Pd 1222).